A 331-amino-acid chain; its full sequence is Anthranilate phosphoribosyltransferase (331 aa).

Residues Gly-78, 81 to 82 (GD), Thr-86, 88 to 91 (NVST), 106 to 114 (KHGNYSVSS), and Ser-118 contribute to the 5-phospho-alpha-D-ribose 1-diphosphate site. Residue Gly-78 participates in anthranilate binding. A Mg(2+)-binding site is contributed by Ser-90. Residue Asn-109 participates in anthranilate binding. Residue Arg-164 participates in anthranilate binding. Residues Asp-222 and Glu-223 each contribute to the Mg(2+) site.

The protein belongs to the anthranilate phosphoribosyltransferase family. In terms of assembly, homodimer. Requires Mg(2+) as cofactor.

It catalyses the reaction N-(5-phospho-beta-D-ribosyl)anthranilate + diphosphate = 5-phospho-alpha-D-ribose 1-diphosphate + anthranilate. The protein operates within amino-acid biosynthesis; L-tryptophan biosynthesis; L-tryptophan from chorismate: step 2/5. Its function is as follows. Catalyzes the transfer of the phosphoribosyl group of 5-phosphorylribose-1-pyrophosphate (PRPP) to anthranilate to yield N-(5'-phosphoribosyl)-anthranilate (PRA). This chain is Anthranilate phosphoribosyltransferase, found in Haloarcula marismortui (strain ATCC 43049 / DSM 3752 / JCM 8966 / VKM B-1809) (Halobacterium marismortui).